We begin with the raw amino-acid sequence, 1242 residues long: Structural polyprotein (1242 aa).

A necessary for nucleocapsid assembly and virus assembly region spans residues 1–36 (MFPYPTLNYSPMAPVNPMAYRDPNPPRRRWRPFRPP). Positions 1–104 (MFPYPTLNYS…KQKPGKRQRM (104 aa)) are disordered. Positions 37–70 (LAAQIEDLRRSIANLTFKQRAPNPPAGPPAKRKK) are host transcription inhibition. The short motif at 44 to 51 (LRRSIANL) is the Supraphysiological nuclear export signal element. Residues 66 to 104 (AKRKKPAPKPKPAAPKKKRQPPPAKKQKRKQKPGKRQRM) show a composition bias toward basic residues. The Nuclear localization signal signature appears at 67–70 (KRKK). The segment at 83–113 (KRQPPPAKKQKRKQKPGKRQRMCMKLESDKT) is binding to the viral RNA. Residues 98–112 (PGKRQRMCMKLESDK) form a ribosome-binding region. Ser110 carries the phosphoserine modification. In terms of domain architecture, Peptidase S3 spans 112-261 (KTFPILLNGQ…KDTPEGSEPW (150 aa)). Thr113 carries the post-translational modification Phosphothreonine. Active-site charge relay system residues include His138, Asp160, and Ser212. Residues 262–273 (SLTTVMCVLANI) form a functions as an uncleaved signal peptide for the precursor of protein E3/E2 region. Asn272 carries an N-linked (GlcNAc...) asparagine; by host glycan. Residues 325 to 688 (DLETHFTQYK…YYYNRYPMTT (364 aa)) are Extracellular-facing. Residues 689–709 (IVGLCTCAAIIMVSCITSVWL) traverse the membrane as a helical segment. Residues 710–744 (LCRTRNLCITPYRLAPNAQVPILLAVLCCVKPTRA) are Cytoplasmic-facing. Residues Cys717, Cys737, and Cys738 are each lipidated (S-palmitoyl cysteine; by host). A transient transmembrane before p62-6K protein processing region spans residues 717–737 (CITPYRLAPNAQVPILLAVLC). Residues 745–759 (DDTLQVLNYLWNNNQ) are Extracellular-facing. 2 consecutive transmembrane segments (helical) span residues 760–780 (NFFW…MRML) and 781–801 (RCLL…GAAA). Residues 802–1218 (YEHTAVMPNK…WSWLKVLVGS (417 aa)) lie on the Extracellular side of the membrane. Intrachain disulfides connect Cys850/Cys915, Cys863/Cys895, Cys864/Cys897, Cys869/Cys879, Cys1061/Cys1073, Cys1103/Cys1178, Cys1108/Cys1182, and Cys1130/Cys1172. The interval 885-902 (VYPFMWGGAYCFCDTENT) is E1 fusion peptide loop. Residues 1219–1239 (TSAFIVLGLIATAVVALVLFT) form a helical membrane-spanning segment. Residues 1240-1242 (HKH) are Cytoplasmic-facing.

As to quaternary structure, part of a tetrameric complex composed of host CRM1, host importin alpha/beta dimer and the viral capsid; this complex blocks the receptor-mediated transport through the nuclear pore. Interacts with host phosphatase PPP1CA; this interaction dephosphorylates the capsid protein, which increases its ability to bind to the viral genome. Interacts with host karyopherin KPNA4; this interaction allows the nuclear import of the viral capsid protein. Interacts with spike glycoprotein E2. Interacts with host IRAK1; the interaction leads to inhibition of IRAK1-dependent signaling. The precursor of protein E3/E2 and E1 form a heterodimer shortly after synthesis. In terms of assembly, the precursor of protein E3/E2 and E1 form a heterodimer shortly after synthesis. Processing of the precursor of protein E3/E2 into E2 and E3 results in a heterodimer of the spike glycoproteins E2 and E1. Spike at virion surface are constituted of three E2-E1 heterodimers. After target cell attachment and endocytosis, E1 change conformation to form homotrimers. Interacts with 6K protein. As to quaternary structure, processing of the precursor of protein E3/E2 into E2 and E3 results in a heterodimer of the spike glycoproteins E2 and E1. Spike at virion surface are constituted of three E2-E1 heterodimers. Interacts with 6K protein. Interacts with spike glycoprotein E1. Interacts with spike glycoprotein E2. Post-translationally, structural polyprotein: Specific enzymatic cleavages in vivo yield mature proteins. Capsid protein is auto-cleaved during polyprotein translation, unmasking a signal peptide at the N-terminus of the precursor of E3/E2. The remaining polyprotein is then targeted to the host endoplasmic reticulum, where host signal peptidase cleaves it into pE2, 6K and E1 proteins. pE2 is further processed to mature E3 and E2 by host furin in trans-Golgi vesicle. In terms of processing, phosphorylated on serine and threonine residues. Palmitoylated via thioester bonds. These palmitoylations may induce disruption of the C-terminus transmembrane. This would result in the reorientation of E2 C-terminus from lumenal to cytoplasmic side. Post-translationally, N-glycosylated. In terms of processing, palmitoylated via thioester bonds.

Its subcellular location is the virion. The protein resides in the host cytoplasm. The protein localises to the host cell membrane. It is found in the host nucleus. It localises to the virion membrane. It carries out the reaction Autocatalytic release of the core protein from the N-terminus of the togavirus structural polyprotein by hydrolysis of a -Trp-|-Ser- bond.. Forms an icosahedral capsid with a T=4 symmetry composed of 240 copies of the capsid protein surrounded by a lipid membrane through which penetrate 80 spikes composed of trimers of E1-E2 heterodimers. The capsid protein binds to the viral RNA genome at a site adjacent to a ribosome binding site for viral genome translation following genome release. Possesses a protease activity that results in its autocatalytic cleavage from the nascent structural protein. Following its self-cleavage, the capsid protein transiently associates with ribosomes, and within several minutes the protein binds to viral RNA and rapidly assembles into icosahedric core particles. The resulting nucleocapsid eventually associates with the cytoplasmic domain of the spike glycoprotein E2 at the cell membrane, leading to budding and formation of mature virions. In case of infection, new virions attach to target cells and after clathrin-mediated endocytosis their membrane fuses with the host endosomal membrane. This leads to the release of the nucleocapsid into the cytoplasm, followed by an uncoating event necessary for the genomic RNA to become accessible. The uncoating might be triggered by the interaction of capsid proteins with ribosomes. Binding of ribosomes would release the genomic RNA since the same region is genomic RNA-binding and ribosome-binding. Specifically inhibits interleukin-1 receptor-associated kinase 1/IRAK1-dependent signaling during viral entry, representing a means by which the alphaviruses may evade innate immune detection and activation prior to viral gene expression. Inhibits host transcription. Forms a tetrameric complex with XPO1/CRM1 and the nuclear import receptor importin. This complex blocks the central channel of host nuclear pores thereby inhibiting the receptor-mediated nuclear transport and thus the host mRNA and rRNA transcription. The inhibition of transcription is linked to a cytopathic effect on the host cell. Its function is as follows. Provides the signal sequence for the translocation of the precursor of protein E3/E2 to the host endoplasmic reticulum. Furin-cleaved E3 remains associated with spike glycoprotein E1 and mediates pH protection of the latter during the transport via the secretory pathway. After virion release from the host cell, the assembly protein E3 is gradually released in the extracellular space. In terms of biological role, plays a role in viral attachment to target host cell, by binding to the cell receptor. Synthesized as a p62 precursor which is processed by furin at the cell membrane just before virion budding, giving rise to E2-E1 heterodimer. The p62-E1 heterodimer is stable, whereas E2-E1 is unstable and dissociate at low pH. p62 is processed at the last step, presumably to avoid E1 fusion activation before its final export to cell surface. E2 C-terminus contains a transitory transmembrane that would be disrupted by palmitoylation, resulting in reorientation of the C-terminal tail from lumenal to cytoplasmic side. This step is critical since E2 C-terminus is involved in budding by interacting with capsid proteins. This release of E2 C-terminus in cytoplasm occurs lately in protein export, and precludes premature assembly of particles at the endoplasmic reticulum membrane. Functionally, constitutive membrane protein involved in virus glycoprotein processing, cell permeabilization, and the budding of viral particles. Disrupts the calcium homeostasis of the cell, probably at the endoplasmic reticulum level. This leads to cytoplasmic calcium elevation. Because of its lipophilic properties, the 6K protein is postulated to influence the selection of lipids that interact with the transmembrane domains of the glycoproteins, which, in turn, affects the deformability of the bilayer required for the extreme curvature that occurs as budding proceeds. Present in low amount in virions, about 3% compared to viral glycoproteins. Class II viral fusion protein. Fusion activity is inactive as long as E1 is bound to E2 in mature virion. After virus attachment to target cell and endocytosis, acidification of the endosome would induce dissociation of E1/E2 heterodimer and concomitant trimerization of the E1 subunits. This E1 trimer is fusion active, and promotes release of viral nucleocapsid in cytoplasm after endosome and viral membrane fusion. Efficient fusion requires the presence of cholesterol and sphingolipid in the target membrane. Fusion is optimal at levels of about 1 molecule of cholesterol per 2 molecules of phospholipids, and is specific for sterols containing a 3-beta-hydroxyl group. The sequence is that of Structural polyprotein from Aedes (Human).